A 232-amino-acid polypeptide reads, in one-letter code: Recombination protein RecR (232 aa).

A C4-type zinc finger spans residues 92-107; sequence CQVCFHLSAEPVCDIC. In terms of domain architecture, Toprim spans 115–209; the sequence is SVICVVSDPR…KVTRIAFGLP (95 aa).

The protein belongs to the RecR family.

Functionally, may play a role in DNA repair. It seems to be involved in an RecBC-independent recombinational process of DNA repair. It may act with RecF and RecO. This is Recombination protein RecR from Synechocystis sp. (strain ATCC 27184 / PCC 6803 / Kazusa).